The sequence spans 89 residues: uncharacterized protein (89 aa).

3 helical membrane passes run 9–29 (ICNFLFQFSLEFFSISSLHSI), 35–55 (ISLSLSLFFLVAILYNIYIYL), and 65–85 (ILFAIPPLCPLCSPCFFFGTS).

The protein resides in the membrane. This is an uncharacterized protein from Schizosaccharomyces pombe (strain 972 / ATCC 24843) (Fission yeast).